The chain runs to 220 residues: Deoxyribose-phosphate aldolase 1 (220 aa).

The active-site Proton donor/acceptor is aspartate 89. Residue lysine 151 is the Schiff-base intermediate with acetaldehyde of the active site. Lysine 180 functions as the Proton donor/acceptor in the catalytic mechanism.

Belongs to the DeoC/FbaB aldolase family. DeoC type 1 subfamily.

It is found in the cytoplasm. The catalysed reaction is 2-deoxy-D-ribose 5-phosphate = D-glyceraldehyde 3-phosphate + acetaldehyde. The protein operates within carbohydrate degradation; 2-deoxy-D-ribose 1-phosphate degradation; D-glyceraldehyde 3-phosphate and acetaldehyde from 2-deoxy-alpha-D-ribose 1-phosphate: step 2/2. Functionally, catalyzes a reversible aldol reaction between acetaldehyde and D-glyceraldehyde 3-phosphate to generate 2-deoxy-D-ribose 5-phosphate. In Staphylococcus aureus (strain MSSA476), this protein is Deoxyribose-phosphate aldolase 1.